The following is a 595-amino-acid chain: Chaperone protein HscA homolog (595 aa).

This sequence belongs to the heat shock protein 70 family.

Chaperone involved in the maturation of iron-sulfur cluster-containing proteins. Has a low intrinsic ATPase activity which is markedly stimulated by HscB. The sequence is that of Chaperone protein HscA homolog from Rickettsia conorii (strain ATCC VR-613 / Malish 7).